Consider the following 403-residue polypeptide: Ribosomal RNA large subunit methyltransferase I (403 aa).

In terms of domain architecture, PUA spans 9 to 88 (YPRLVLSKGR…ESIDIAFFTR (80 aa)).

This sequence belongs to the methyltransferase superfamily. RlmI family.

The protein localises to the cytoplasm. It carries out the reaction cytidine(1962) in 23S rRNA + S-adenosyl-L-methionine = 5-methylcytidine(1962) in 23S rRNA + S-adenosyl-L-homocysteine + H(+). Functionally, specifically methylates the cytosine at position 1962 (m5C1962) of 23S rRNA. The polypeptide is Ribosomal RNA large subunit methyltransferase I (Salmonella newport (strain SL254)).